Here is a 520-residue protein sequence, read N- to C-terminus: MSIKEEVESRKTFAIISHPDAGKTTLTEKLLLFGGAIREAGTVKGKKSGKFATSDWMKVEQERGISVTSSVMQFDYDHYKINILDTPGHEDFSEDTYRTLMAVDSAVMVIDCAKGIEPQTLKLFKVCKMRGIPIFTFINKLDRVGKEPFELLDEIESTLEIETYPMNWPVGMGQNFFGIIDRESHTIEPFRDEENVLHLNDDYELEEDHAMKNDSAFTQAIEELMLVEEAGETFDNEALLSGDLTPVFFGSALANFGVQNFLNAYVDHAPMPNARQTNEDIEVSPFDLDFSGFIFKIQANMDPKHRDRIAFMRVVSGAFERGMDVTLQRTHKKQKITRSTSFMADDKETVNHAVAGDIIGLYDTGNYQIGDTLVGGNQKFSFQELPQFTPELFMKVSAKNVMKQKHFHKGIEQLVQEGAIQYYKALHTNQIIIGAVGQLQFEVFEHRLKNEYNVDVVMEPVGQKIARWIENEEDIKDKMSTSRSILVKDIYDNYVFLFENEFATRWFEEKFPEIKLYGLL.

Residues 8-277 (ESRKTFAIIS…HAPMPNARQT (270 aa)) form the tr-type G domain. Residues 17 to 24 (SHPDAGKT), 85 to 89 (DTPGH), and 139 to 142 (NKLD) each bind GTP.

The protein belongs to the TRAFAC class translation factor GTPase superfamily. Classic translation factor GTPase family. PrfC subfamily.

The protein localises to the cytoplasm. Its function is as follows. Increases the formation of ribosomal termination complexes and stimulates activities of RF-1 and RF-2. It binds guanine nucleotides and has strong preference for UGA stop codons. It may interact directly with the ribosome. The stimulation of RF-1 and RF-2 is significantly reduced by GTP and GDP, but not by GMP. This chain is Peptide chain release factor 3, found in Staphylococcus saprophyticus subsp. saprophyticus (strain ATCC 15305 / DSM 20229 / NCIMB 8711 / NCTC 7292 / S-41).